The primary structure comprises 320 residues: Cytochrome f (320 aa).

The first 35 residues, 1–35 (MENRNTFSWVKEQITRSISVSIMIYVITRTSISNA), serve as a signal peptide directing secretion. 4 residues coordinate heme: tyrosine 36, cysteine 56, cysteine 59, and histidine 60. Residues 286 to 306 (VQGLLFFFASVILAQVFLVLK) form a helical membrane-spanning segment.

It belongs to the cytochrome f family. As to quaternary structure, the 4 large subunits of the cytochrome b6-f complex are cytochrome b6, subunit IV (17 kDa polypeptide, petD), cytochrome f and the Rieske protein, while the 4 small subunits are PetG, PetL, PetM and PetN. The complex functions as a dimer. It depends on heme as a cofactor.

Its subcellular location is the plastid. It localises to the chloroplast thylakoid membrane. Its function is as follows. Component of the cytochrome b6-f complex, which mediates electron transfer between photosystem II (PSII) and photosystem I (PSI), cyclic electron flow around PSI, and state transitions. This chain is Cytochrome f, found in Hordeum vulgare (Barley).